The primary structure comprises 445 residues: Phosphoglucosamine mutase (445 aa).

Residue Ser102 is the Phosphoserine intermediate of the active site. Positions 102, 241, 243, and 245 each coordinate Mg(2+). Ser102 carries the phosphoserine modification.

The protein belongs to the phosphohexose mutase family. Mg(2+) is required as a cofactor. Post-translationally, activated by phosphorylation.

The enzyme catalyses alpha-D-glucosamine 1-phosphate = D-glucosamine 6-phosphate. Functionally, catalyzes the conversion of glucosamine-6-phosphate to glucosamine-1-phosphate. This Aliivibrio salmonicida (strain LFI1238) (Vibrio salmonicida (strain LFI1238)) protein is Phosphoglucosamine mutase.